Consider the following 297-residue polypeptide: Cyclin-dependent kinase 1 (297 aa).

Residues 4–293 (YQKVEKIGEG…AKRALQQNYL (290 aa)) enclose the Protein kinase domain. Residues 10–18 (IGEGTYGVV) and K33 each bind ATP. Residue T14 is modified to Phosphothreonine. Phosphotyrosine is present on Y15. D134 (proton acceptor) is an active-site residue. A Phosphothreonine modification is found at T167.

It belongs to the protein kinase superfamily. CMGC Ser/Thr protein kinase family. CDC2/CDKX subfamily. In terms of assembly, forms a stable but non-covalent complex with regulatory subunit suc1 and with a cyclin. Interacts with cyclin cdc13. Interacts with cyclin cig2. Interacts with cdc37.

The protein resides in the cytoplasm. It carries out the reaction L-seryl-[protein] + ATP = O-phospho-L-seryl-[protein] + ADP + H(+). The catalysed reaction is L-threonyl-[protein] + ATP = O-phospho-L-threonyl-[protein] + ADP + H(+). Phosphorylation at Thr-14 or Tyr-15 inactivates the enzyme, while phosphorylation at Thr-167 activates it. In terms of biological role, cyclin-dependent kinase that acts as a master regulator of the mitotic and meiotic cell cycles. Required to drive the G1-S and G2-M transitions, and initiation of premeiotic DNA replication and meiosis II. More than 200 substrates have been identified. Substrate specificity is in part regulated by the bound cyclin protein. When complexed with cyclin cig2, it drives the G1-S phase transition. When complexed with cyclin cdc13, it drives the G2-M transition and initiation of meiosis II. Its activity rises throughout the cell cycle and substrate specificity is further influenced by activity thresholds with more sensitive substrates phosphorylated earlier in the cell cycle than less sensitive substrates. Phosphorylates dis1 during metaphase to ensure proper microtubule dynamics and accurate chromosome segregation. Phosphorylates the repetitive C-terminus of the large subunit of RNA polymerase II rpb1. Inactivated by checkpoint signaling following detection of cellular damage, leading to cell cycle arrest to allow damage repair. Inactivated during G2 DNA damage checkpoint signaling. Inactivated in response to defective RNA splicing. The chain is Cyclin-dependent kinase 1 from Schizosaccharomyces pombe (strain 972 / ATCC 24843) (Fission yeast).